Consider the following 197-residue polypeptide: FMN-dependent NADH:quinone oxidoreductase (197 aa).

Residues Ser-10 and Ser-16–Ser-18 each bind FMN.

This sequence belongs to the azoreductase type 1 family. Homodimer. The cofactor is FMN.

It catalyses the reaction 2 a quinone + NADH + H(+) = 2 a 1,4-benzosemiquinone + NAD(+). The catalysed reaction is N,N-dimethyl-1,4-phenylenediamine + anthranilate + 2 NAD(+) = 2-(4-dimethylaminophenyl)diazenylbenzoate + 2 NADH + 2 H(+). Quinone reductase that provides resistance to thiol-specific stress caused by electrophilic quinones. Functionally, also exhibits azoreductase activity. Catalyzes the reductive cleavage of the azo bond in aromatic azo compounds to the corresponding amines. This Erythrobacter litoralis (strain HTCC2594) protein is FMN-dependent NADH:quinone oxidoreductase.